The chain runs to 241 residues: MAQVSMRDMLNAGVHFGHQTRYWNPQMKPYIFGARNGVHIINLEKTLPLFNDALAELTRIASNNGKILFVGTKRAASDAVKAAAVESQQFYVNHRWLGGMLTNWKTVRQSIKRLKDLEAQSQDGTFDKLTKKEALDRTRDMAKLELSLGGIKDMAGLPDAIFVIGADYEHIAIKEANNLGIPVFAIVDTNASPAGVNHVIPGNDDAARAIQLYLDAAVAAIKEGRGQETVAAEFVAEEAAE.

It belongs to the universal ribosomal protein uS2 family.

This Glaesserella parasuis serovar 5 (strain SH0165) (Haemophilus parasuis) protein is Small ribosomal subunit protein uS2.